The primary structure comprises 291 residues: ATP synthase gamma chain (291 aa).

Belongs to the ATPase gamma chain family. F-type ATPases have 2 components, CF(1) - the catalytic core - and CF(0) - the membrane proton channel. CF(1) has five subunits: alpha(3), beta(3), gamma(1), delta(1), epsilon(1). CF(0) has three main subunits: a, b and c.

It is found in the cell inner membrane. Produces ATP from ADP in the presence of a proton gradient across the membrane. The gamma chain is believed to be important in regulating ATPase activity and the flow of protons through the CF(0) complex. The sequence is that of ATP synthase gamma chain from Xanthobacter autotrophicus (strain ATCC BAA-1158 / Py2).